Here is a 30-residue protein sequence, read N- to C-terminus: Poly-His-poly-Gly peptide 2 (30 aa).

The span at 1-18 (EDDHDHHHHHHHHHHHHG) shows a compositional bias: basic residues. A disordered region spans residues 1–30 (EDDHDHHHHHHHHHHHHGVGGGGGGGGGGA). The span at 19–30 (VGGGGGGGGGGA) shows a compositional bias: gly residues.

As to expression, expressed by the venom gland.

It is found in the secreted. Its function is as follows. May serve as a metalloproteinase inhibitor during glandular storage. Their inhibition may be instantly disengaged, by dilution or physiochemical change, when venom is injected into tissue of the victim. This is Poly-His-poly-Gly peptide 2 from Atheris nitschei (Great lakes bush viper).